A 306-amino-acid chain; its full sequence is Embryogenic cell protein 40 (306 aa).

Disordered stretches follow at residues 1-57, 80-171, and 188-306; these read MADL…ASHG, AATH…GGLG, and GTGI…PTSH. The span at 12-23 shows a compositional bias: polar residues; the sequence is IQLTDQHGNPVQ. The segment covering 32–44 has biased composition (low complexity); the sequence is VHITGVATTGATT. Composition is skewed to gly residues over residues 85–119, 127–151, and 159–171; these read GSHG…GTGT, GPTG…GTGV, and GPTG…GGLG. A compositionally biased stretch (low complexity) spans 194 to 204; it reads GSAPASAGSHS. 2 stretches are compositionally biased toward basic and acidic residues: residues 205 to 218 and 243 to 259; these read HAPE…EQLH and KIKE…DEHT. Residues 260 to 278 show a composition bias toward low complexity; that stretch reads TVATTKTTTAAHPGGAAVA. Basic and acidic residues predominate over residues 279–298; the sequence is VEHHEHEKKSMLDKIKDKLP.

It belongs to the plant dehydrin family.

The sequence is that of Embryogenic cell protein 40 (ECP40) from Daucus carota (Wild carrot).